The primary structure comprises 174 residues: Co-chaperone protein HscB homolog (174 aa).

The J domain maps to 2 to 74 (NYFELFSFTP…ILRAEHMLSL (73 aa)).

Belongs to the HscB family. In terms of assembly, interacts with HscA and stimulates its ATPase activity.

Co-chaperone involved in the maturation of iron-sulfur cluster-containing proteins. Seems to help targeting proteins to be folded toward HscA. The protein is Co-chaperone protein HscB homolog of Shewanella woodyi (strain ATCC 51908 / MS32).